A 281-amino-acid chain; its full sequence is Putrescine transport system permease protein PotI (281 aa).

Residues 1 to 13 (MNNLPVVRSPWRI) are Cytoplasmic-facing. The chain crosses the membrane as a helical span at residues 14 to 33 (VILLLGFTFLYAPMLMLVIY). The Periplasmic portion of the chain corresponds to 34-68 (SFNSSKLVTVWAGWSTRWYGELLRDDAMMSAVGLS). The 196-residue stretch at 65–260 (VGLSLTIAAC…GAVGIVGFIA (196 aa)) folds into the ABC transmembrane type-1 domain. The helical transmembrane segment at 69 to 88 (LTIAACAATAAAILGTIAAV) threads the bilayer. At 89–115 (VLVRFGRFRGSNGFAFMITAPLVMPDV) the chain is on the cytoplasmic side. A helical transmembrane segment spans residues 116-135 (ITGLSLLLLFVALAHAIGWP). The Periplasmic portion of the chain corresponds to 136 to 140 (ADRGM). The chain crosses the membrane as a helical span at residues 141–160 (LTIWLAHVTFCTAYVAVVIS). Residues 161–186 (SRLRELDRSIEEAAMDLGATPLKVFF) are Cytoplasmic-facing. The helical transmembrane segment at 187–206 (VITLPMIMPAIISGWLLAFT) threads the bilayer. At 207–243 (LSLDDLVIASFVSGPGATTLPMLVFSSVRMGVNPEIN) the chain is on the periplasmic side. The helical transmembrane segment at 244–263 (ALATLILGAVGIVGFIAWYL) threads the bilayer. Over 264 to 281 (MARAEKQRIRDIQRARRG) the chain is Cytoplasmic.

Belongs to the binding-protein-dependent transport system permease family. CysTW subfamily. The complex is composed of two ATP-binding proteins (PotG), two transmembrane proteins (PotH and PotI) and a solute-binding protein (PotF).

The protein resides in the cell inner membrane. Functionally, part of the ABC transporter complex PotFGHI involved in putrescine uptake. Responsible for the translocation of the substrate across the membrane. The sequence is that of Putrescine transport system permease protein PotI from Escherichia coli O6:H1 (strain CFT073 / ATCC 700928 / UPEC).